The following is a 206-amino-acid chain: Large ribosomal subunit protein uL4 (206 aa).

Residues 43 to 78 (ARSGNRKQKDREEVKHTTKKPWRQKGTGRARAGMSS) are disordered. Residues 49–58 (KQKDREEVKH) show a composition bias toward basic and acidic residues. Positions 59–70 (TTKKPWRQKGTG) are enriched in basic residues.

It belongs to the universal ribosomal protein uL4 family. In terms of assembly, part of the 50S ribosomal subunit.

In terms of biological role, one of the primary rRNA binding proteins, this protein initially binds near the 5'-end of the 23S rRNA. It is important during the early stages of 50S assembly. It makes multiple contacts with different domains of the 23S rRNA in the assembled 50S subunit and ribosome. Forms part of the polypeptide exit tunnel. The sequence is that of Large ribosomal subunit protein uL4 from Cupriavidus metallidurans (strain ATCC 43123 / DSM 2839 / NBRC 102507 / CH34) (Ralstonia metallidurans).